Consider the following 575-residue polypeptide: Triokinase/FMN cyclase (575 aa).

One can recognise a DhaK domain in the interval 9–336; that stretch reads SVAGCADDAL…IDAETTAAAW (328 aa). Dihydroxyacetone is bound by residues 56–59, Lys-109, and Asp-114; that span reads GSGH. The active-site Tele-hemiaminal-histidine intermediate is His-221. The segment at 348–367 is disordered; the sequence is KRSRVAPAEPQEAPDSTAAG. Ser-350 is subject to Phosphoserine. The region spanning 372–571 is the DhaL domain; the sequence is KRMALVLERV…AAAILRAILE (200 aa). ATP-binding positions include 401 to 404, 446 to 447, Gly-486, and 494 to 495; these read DGDC, SS, and TM. Residues Ser-511 and Ser-545 each carry the phosphoserine modification. Residue 556–558 coordinates ATP; it reads DPG.

Belongs to the dihydroxyacetone kinase (DAK) family. Homodimer. Interacts with IFIH1 (via the CARD domains), the interaction is inhibited by viral infection. The cofactor is Mg(2+). Mn(2+) serves as cofactor. Requires Co(2+) as cofactor. As to expression, detected in erythrocytes (at protein level).

The catalysed reaction is dihydroxyacetone + ATP = dihydroxyacetone phosphate + ADP + H(+). It catalyses the reaction D-glyceraldehyde + ATP = D-glyceraldehyde 3-phosphate + ADP + H(+). The enzyme catalyses FAD = riboflavin cyclic-4',5'-phosphate + AMP + H(+). Each activity is inhibited by the substrate(s) of the other. Functionally, catalyzes both the phosphorylation of dihydroxyacetone and of glyceraldehyde, and the splitting of ribonucleoside diphosphate-X compounds among which FAD is the best substrate. Represses IFIH1-mediated cellular antiviral response. This Homo sapiens (Human) protein is Triokinase/FMN cyclase.